Reading from the N-terminus, the 280-residue chain is Phosphatidylserine decarboxylase proenzyme (280 aa).

Catalysis depends on charge relay system; for autoendoproteolytic cleavage activity residues aspartate 86, histidine 143, and serine 246. Serine 246 functions as the Schiff-base intermediate with substrate; via pyruvic acid; for decarboxylase activity in the catalytic mechanism. Pyruvic acid (Ser); by autocatalysis is present on serine 246.

This sequence belongs to the phosphatidylserine decarboxylase family. PSD-B subfamily. Prokaryotic type I sub-subfamily. In terms of assembly, heterodimer of a large membrane-associated beta subunit and a small pyruvoyl-containing alpha subunit. It depends on pyruvate as a cofactor. In terms of processing, is synthesized initially as an inactive proenzyme. Formation of the active enzyme involves a self-maturation process in which the active site pyruvoyl group is generated from an internal serine residue via an autocatalytic post-translational modification. Two non-identical subunits are generated from the proenzyme in this reaction, and the pyruvate is formed at the N-terminus of the alpha chain, which is derived from the carboxyl end of the proenzyme. The autoendoproteolytic cleavage occurs by a canonical serine protease mechanism, in which the side chain hydroxyl group of the serine supplies its oxygen atom to form the C-terminus of the beta chain, while the remainder of the serine residue undergoes an oxidative deamination to produce ammonia and the pyruvoyl prosthetic group on the alpha chain. During this reaction, the Ser that is part of the protease active site of the proenzyme becomes the pyruvoyl prosthetic group, which constitutes an essential element of the active site of the mature decarboxylase.

The protein localises to the cell membrane. The catalysed reaction is a 1,2-diacyl-sn-glycero-3-phospho-L-serine + H(+) = a 1,2-diacyl-sn-glycero-3-phosphoethanolamine + CO2. Its pathway is phospholipid metabolism; phosphatidylethanolamine biosynthesis; phosphatidylethanolamine from CDP-diacylglycerol: step 2/2. In terms of biological role, catalyzes the formation of phosphatidylethanolamine (PtdEtn) from phosphatidylserine (PtdSer). The polypeptide is Phosphatidylserine decarboxylase proenzyme (Brevibacillus brevis (strain 47 / JCM 6285 / NBRC 100599)).